The sequence spans 703 residues: Arylphorin subunit beta (703 aa).

An N-terminal signal peptide occupies residues 1–16 (MKTVIILAGLVALALG). N-linked (GlcNAc...) asparagine glycosylation is found at Asn-72 and Asn-211.

It belongs to the hemocyanin family. As to quaternary structure, arylphorin is a hexamer of subunits alpha and beta. In terms of tissue distribution, fat body.

The protein resides in the secreted. The protein localises to the extracellular space. Its function is as follows. Arylphorin is a larval storage protein (LSP) which may serve as a storage protein used primarily as a source of aromatic amino acids for protein synthesis during metamorphosis. It is a constituent of the sclerotizing system of the cuticle, and serves as a carrier for ecdysteroid hormone. The chain is Arylphorin subunit beta from Manduca sexta (Tobacco hawkmoth).